An 818-amino-acid polypeptide reads, in one-letter code: MKLKRILLSVALLCGIGTTAMADKGMWLLNELNQQNYERMKELGFKLSPEQLYSLGQPSVASAVVIFGGGCTGITVSNEGLIFTNHHCGFGAIQSQSTVDHDYLRDGFRSNNHVEELPIPGLSVRYLREIVDVTPRIEAAVKGAKSEMERMQIIEELSQKINAEYTKGSTVVGEVTPYYAGNKYYVVVYNVFQDVRLVMAPPSSVGKFGGDTDNWMWTRHTGDFSVFRVYADANNNPALYSQNNKPYKPISYAPVSLNGYREGDYAMTIGFPGSTNRYLTSWGVEDVVNNENSPRIEVRGIKQAIWKEAMEADQATRIKYASKYAQSSNYWKNSIGMNRGLKNLDVVNRKRAEEKAFEAWIAKNNSQSTYGHILPGLKADYAKSAAISKDINYLYETLWGGTEIVRLARDVNSVGRIQAADMPKYKGRLEELYKDYLPSLDVKVLPAMLDIVRQRVSADCQPDIFKFIDKKFKGSTEKYAQYVFEKSIVPYADKVKDFLNLPADKQKKILDKDPAVALFNSVLPAIMQAQDKSEEMMLNIEKGKREYFAASRIMDPNRQMPSDANFTMRMSYGSIKGYAPKDGAWYNYYTTEQGVFEKQDPTSSEFAVQPEILSLLRSKDFGQYGVGDHLRLCFLSDNDITGGNSGSPVFNGNGELIGLAFDGNWEAMSGDIEFEPDLQRTISVDIRYVLFMIDKWAKMPHLIKELNLVKGDQRDLMPAGKGGNCSHKKAQTCAKKECSKGKKCAEKSATCISAMKDGKPCKTEKACAAGQKSAEKKANCCSTMKDGKPCTGDKDCAKSGKACCGKNKEAAAKKASKK.

The signal sequence occupies residues 1 to 22 (MKLKRILLSVALLCGIGTTAMA). Catalysis depends on charge relay system residues histidine 87, aspartate 223, and serine 645.

Belongs to the peptidase S46 family.

Its function is as follows. Catalyzes the removal of dipeptides from the N-terminus of oligopeptides. Most efficiently cleaves the synthetic substrate Met-Leu-methylcoumaryl-7-amide (Met-Leu-MCA), and slowly hydrolyzes Leu-Gln-, Lys-Ala-, Leu-Arg, and Ala-Asn-MCA. Is likely involved in amino acid metabolism and bacterial growth/survival of asaccharolytic P.endodontalis, that utilizes amino acids from extracellular proteinaceous nutrients as energy and carbon sources. The sequence is that of Dipeptidyl-peptidase 7 from Porphyromonas endodontalis (strain ATCC 35406 / DSM 24491 / JCM 8526 / CCUG 16442 / BCRC 14492 / NCTC 13058 / HG 370) (Bacteroides endodontalis).